A 394-amino-acid polypeptide reads, in one-letter code: Protein STRICTOSIDINE SYNTHASE-LIKE 1 (394 aa).

The signal sequence occupies residues 1–21 (MESLLLIAYAFLYLFLLSHEA). Basic and acidic residues predominate over residues 61-73 (GLEKRPNHSEDNP). The segment at 61–92 (GLEKRPNHSEDNPPSRGWTGEPGLDPRGEGPY) is disordered. N-linked (GlcNAc...) asparagine glycans are attached at residues Asn-67, Asn-122, and Asn-196.

This sequence belongs to the strictosidine synthase family.

It localises to the vacuole. This Arabidopsis thaliana (Mouse-ear cress) protein is Protein STRICTOSIDINE SYNTHASE-LIKE 1.